The chain runs to 910 residues: Putative coatomer subunit beta'-3 (910 aa).

9 WD repeats span residues 13-52, 55-94, 97-136, 140-180, 183-224, 227-266, 269-309, 351-393, and 461-501; these read QRSE…MVKS, VTEL…KVKV, AHTD…MCTQ, GHSH…PNFT, GHSK…CVQT, GHAH…LENT, YGLE…ASMD, TCDL…GSAL, and RIDV…SHLD. Acidic residues predominate over residues 865-884; it reads ENGVEESQEDAVEVDVEADG. The segment at 865–910 is disordered; it reads ENGVEESQEDAVEVDVEADGSTDGTVLVNGNDTEEQWGTNNEESLA. Polar residues predominate over residues 886 to 910; that stretch reads TDGTVLVNGNDTEEQWGTNNEESLA.

Belongs to the WD repeat COPB2 family. In terms of assembly, oligomeric complex that consists of at least the alpha, beta, beta', gamma, delta, epsilon and zeta subunits.

It localises to the cytoplasm. The protein localises to the golgi apparatus membrane. Its subcellular location is the cytoplasmic vesicle. The protein resides in the COPI-coated vesicle membrane. Its function is as follows. The coatomer is a cytosolic protein complex that binds to dilysine motifs and reversibly associates with Golgi non-clathrin-coated vesicles, which further mediate biosynthetic protein transport from the ER, via the Golgi up to the trans Golgi network. Coatomer complex is required for budding from Golgi membranes, and is essential for the retrograde Golgi-to-ER transport of dilysine-tagged proteins. This chain is Putative coatomer subunit beta'-3, found in Oryza sativa subsp. japonica (Rice).